The primary structure comprises 349 residues: SUMO-activating enzyme subunit 1 (349 aa).

N-acetylmethionine is present on M1. V2 is subject to N-acetylvaline; in SUMO-activating enzyme subunit 1, N-terminally processed. The residue at position 15 (S15) is a Phosphoserine. An N6-acetyllysine modification is found at K201.

Belongs to the ubiquitin-activating E1 family. As to quaternary structure, heterodimer of SAE1 and UBA2/SAE2. The heterodimer corresponds to the two domains that are encoded on a single polypeptide chain in ubiquitin-activating enzyme E1. Interacts with UBE2I.

It is found in the nucleus. It participates in protein modification; protein sumoylation. The heterodimer acts as an E1 ligase for SUMO1, SUMO2, SUMO3, and probably SUMO4. It mediates ATP-dependent activation of SUMO proteins followed by formation of a thioester bond between a SUMO protein and a conserved active site cysteine residue on UBA2/SAE2. This chain is SUMO-activating enzyme subunit 1 (Sae1), found in Rattus norvegicus (Rat).